We begin with the raw amino-acid sequence, 151 residues long: Ribonuclease H (151 aa).

Residues 1–141 enclose the RNase H type-1 domain; that stretch reads MKHVDIFTDG…ADELARRGME (141 aa). Mg(2+) is bound by residues Asp9, Glu47, Asp69, and Asp133.

This sequence belongs to the RNase H family. As to quaternary structure, monomer. Mg(2+) is required as a cofactor.

The protein resides in the cytoplasm. It carries out the reaction Endonucleolytic cleavage to 5'-phosphomonoester.. Endonuclease that specifically degrades the RNA of RNA-DNA hybrids. The protein is Ribonuclease H of Rhizobium etli (strain ATCC 51251 / DSM 11541 / JCM 21823 / NBRC 15573 / CFN 42).